We begin with the raw amino-acid sequence, 338 residues long: D-erythrose-4-phosphate dehydrogenase (338 aa).

12 to 13 lines the NAD(+) pocket; that stretch reads RI. Residues 154-156, arginine 200, 213-214, and arginine 236 each bind substrate; these read SCT and TK. Cysteine 155 acts as the Nucleophile in catalysis. NAD(+) is bound at residue asparagine 318.

This sequence belongs to the glyceraldehyde-3-phosphate dehydrogenase family. Epd subfamily. As to quaternary structure, homotetramer.

Its subcellular location is the cytoplasm. It catalyses the reaction D-erythrose 4-phosphate + NAD(+) + H2O = 4-phospho-D-erythronate + NADH + 2 H(+). Its pathway is cofactor biosynthesis; pyridoxine 5'-phosphate biosynthesis; pyridoxine 5'-phosphate from D-erythrose 4-phosphate: step 1/5. Catalyzes the NAD-dependent conversion of D-erythrose 4-phosphate to 4-phosphoerythronate. The polypeptide is D-erythrose-4-phosphate dehydrogenase (Pectobacterium carotovorum subsp. carotovorum (strain PC1)).